A 209-amino-acid polypeptide reads, in one-letter code: Small ribosomal subunit protein uS3 (209 aa).

Positions Ile38–Lys107 constitute a KH type-2 domain.

The protein belongs to the universal ribosomal protein uS3 family. Part of the 30S ribosomal subunit. Forms a tight complex with proteins S10 and S14.

Its function is as follows. Binds the lower part of the 30S subunit head. Binds mRNA in the 70S ribosome, positioning it for translation. The chain is Small ribosomal subunit protein uS3 from Thermosipho africanus (strain TCF52B).